The sequence spans 204 residues: Nucleoside triphosphate pyrophosphatase (204 aa).

Residue D79 is the Proton acceptor of the active site.

This sequence belongs to the Maf family. The cofactor is a divalent metal cation.

Its subcellular location is the cytoplasm. The enzyme catalyses a ribonucleoside 5'-triphosphate + H2O = a ribonucleoside 5'-phosphate + diphosphate + H(+). It carries out the reaction a 2'-deoxyribonucleoside 5'-triphosphate + H2O = a 2'-deoxyribonucleoside 5'-phosphate + diphosphate + H(+). Nucleoside triphosphate pyrophosphatase. May have a dual role in cell division arrest and in preventing the incorporation of modified nucleotides into cellular nucleic acids. This chain is Nucleoside triphosphate pyrophosphatase, found in Trichodesmium erythraeum (strain IMS101).